A 682-amino-acid chain; its full sequence is Potassium-transporting ATPase ATP-binding subunit (682 aa).

4 helical membrane passes run 34 to 54, 62 to 82, 219 to 239, and 254 to 274; these read PVMF…IAMA, ALFS…ANFA, IALT…TATL, and VLVA…LSAI. The active-site 4-aspartylphosphate intermediate is D307. Residues D344, E348, 377–384, and K395 each bind ATP; that span reads FTAQSRMS. The Mg(2+) site is built by D518 and D522. 3 helical membrane-spanning segments follow: residues 588 to 608, 616 to 636, and 656 to 676; these read FAII…LNIM, AILS…PLAL, and IYGL…DLLL.

Belongs to the cation transport ATPase (P-type) (TC 3.A.3) family. Type IA subfamily. As to quaternary structure, the system is composed of three essential subunits: KdpA, KdpB and KdpC.

It is found in the cell inner membrane. It carries out the reaction K(+)(out) + ATP + H2O = K(+)(in) + ADP + phosphate + H(+). In terms of biological role, part of the high-affinity ATP-driven potassium transport (or Kdp) system, which catalyzes the hydrolysis of ATP coupled with the electrogenic transport of potassium into the cytoplasm. This subunit is responsible for energy coupling to the transport system and for the release of the potassium ions to the cytoplasm. This Escherichia coli (strain SMS-3-5 / SECEC) protein is Potassium-transporting ATPase ATP-binding subunit.